We begin with the raw amino-acid sequence, 289 residues long: Delta-sarcoglycan (289 aa).

Over 1 to 35 the chain is Cytoplasmic; the sequence is MPQEQYTHHRSTMPGSVGPQVYKVGIYGWRKRCLY. Residues 36-56 form a helical; Signal-anchor for type II membrane protein membrane-spanning segment; the sequence is FFVLLLMILILVNLAMTIWIL. Residues 57 to 289 lie on the Extracellular side of the membrane; the sequence is KVMNFTIDGM…TCQINTSVCL (233 aa). Residues Asn60 and Asn108 are each glycosylated (N-linked (GlcNAc...) asparagine). Intrachain disulfides connect Cys263/Cys288 and Cys265/Cys281. The N-linked (GlcNAc...) asparagine glycan is linked to Asn284.

It belongs to the sarcoglycan beta/delta/gamma/zeta family. As to quaternary structure, interacts with FLNC and DAG1. Cross-link to form 2 major subcomplexes: one consisting of SGCB, SGCD and SGCG and the other consisting of SGCB and SGCD. The association between SGCB and SGCG is particularly strong while SGCA is loosely associated with the other sarcoglycans. In terms of processing, glycosylated. Disulfide bonds are present. As to expression, most strongly expressed in skeletal and cardiac muscle. Also detected in smooth muscle. Weak expression in brain and lung.

It localises to the cell membrane. It is found in the sarcolemma. The protein resides in the cytoplasm. The protein localises to the cytoskeleton. Functionally, component of the sarcoglycan complex, a subcomplex of the dystrophin-glycoprotein complex which forms a link between the F-actin cytoskeleton and the extracellular matrix. The sequence is that of Delta-sarcoglycan (SGCD) from Homo sapiens (Human).